The primary structure comprises 260 residues: CD27 antigen (260 aa).

The first 19 residues, 1–19 (MARPHPWWLCVLGTLVGLS), serve as a signal peptide directing secretion. The Extracellular portion of the chain corresponds to 20–191 (ATPAPKSCPE…RSLCSSDFIR (172 aa)). 3 TNFR-Cys repeats span residues 26 to 63 (SCPE…AQCD), 64 to 104 (PCIP…NAEC), and 105 to 141 (ACRN…PHPQ). 8 disulfide bridges follow: C27–C39, C40–C53, C43–C62, C65–C81, C84–C96, C87–C104, C106–C120, and C112–C117. N-linked (GlcNAc...) asparagine glycosylation occurs at N95. O-linked (GalNAc...) serine glycosylation occurs at S127. Residues 192–212 (ILVIFSGMFLVFTLAGALFLH) form a helical membrane-spanning segment. Topologically, residues 213 to 260 (QRRKYRSNKGESPVEPAEPCHYSCPREEEGSTIPIQEDYRKPEPACSP) are cytoplasmic. S219 is subject to Phosphoserine. The segment at 219–260 (SNKGESPVEPAEPCHYSCPREEEGSTIPIQEDYRKPEPACSP) is disordered. The span at 249-260 (EDYRKPEPACSP) shows a compositional bias: basic and acidic residues.

Homodimer. Interacts with SIVA1; may play a role in apoptosis through association with SIVA1. Interacts with TRAF2. Interacts ith PTPN6. Post-translationally, phosphorylated. N-glycosylated. In terms of processing, O-glycosylated with core 1 or possibly core 8 glycans. In terms of tissue distribution, found in most T-lymphocytes.

Its subcellular location is the cell membrane. Its function is as follows. Costimulatory immune-checkpoint receptor expressed at the surface of T-cells, NK-cells and B-cells which binds to and is activated by its ligand CD70/CD27L expressed by B-cells. The CD70-CD27 signaling pathway mediates antigen-specific T-cell activation and expansion which in turn provides immune surveillance of B-cells. Mechanistically, CD70 ligation activates the TRAF2-PTPN6 axis that subsequently inhibits LCK phosphorylation to promote phenotypic and transcriptional adaptations of T-cell memory. In addition, activation by CD70 on early progenitor cells provides a negative feedback signal to leukocyte differentiation during immune activation and thus modulates hematopoiesis. Negatively regulates the function of Th2 lymphocytes in the adipose tissue. The sequence is that of CD27 antigen from Homo sapiens (Human).